The primary structure comprises 176 residues: Adenine phosphoribosyltransferase (176 aa).

This sequence belongs to the purine/pyrimidine phosphoribosyltransferase family. Homodimer.

It localises to the cytoplasm. The enzyme catalyses AMP + diphosphate = 5-phospho-alpha-D-ribose 1-diphosphate + adenine. It participates in purine metabolism; AMP biosynthesis via salvage pathway; AMP from adenine: step 1/1. Catalyzes a salvage reaction resulting in the formation of AMP, that is energically less costly than de novo synthesis. The sequence is that of Adenine phosphoribosyltransferase from Roseobacter denitrificans (strain ATCC 33942 / OCh 114) (Erythrobacter sp. (strain OCh 114)).